A 143-amino-acid chain; its full sequence is Small ribosomal subunit protein uS12 (143 aa).

Pro62 is subject to Hydroxyproline.

This sequence belongs to the universal ribosomal protein uS12 family. As to quaternary structure, component of the 40S small ribosomal subunit.

It is found in the cytoplasm. Its subcellular location is the cytosol. It localises to the rough endoplasmic reticulum. The sequence is that of Small ribosomal subunit protein uS12 (rps-23) from Caenorhabditis elegans.